The chain runs to 272 residues: D-aminoacyl-tRNA deacylase (272 aa).

As to quaternary structure, monomer. Requires Zn(2+) as cofactor.

It catalyses the reaction a D-aminoacyl-tRNA + H2O = a tRNA + a D-alpha-amino acid + H(+). The enzyme catalyses glycyl-tRNA(Ala) + H2O = tRNA(Ala) + glycine + H(+). It carries out the reaction D-tyrosyl-tRNA(Tyr) + H2O = D-tyrosine + tRNA(Tyr). In terms of biological role, D-aminoacyl-tRNA deacylase with broad substrate specificity. By recycling D-aminoacyl-tRNA to D-amino acids and free tRNA molecules, this enzyme counteracts the toxicity associated with the formation of D-aminoacyl-tRNA entities in vivo. Catalyzes the hydrolysis of D-tyrosyl-tRNA(Tyr) and D-aspartyl-tRNA(Asp). The sequence is that of D-aminoacyl-tRNA deacylase from Pyrococcus abyssi (strain GE5 / Orsay).